Reading from the N-terminus, the 240-residue chain is uncharacterized protein (240 aa).

The ABC transporter domain occupies 2–223; sequence VRIQDLSLAF…GNAPRELHQA (222 aa). 34 to 41 contributes to the ATP binding site; it reads GSSGVGKS.

The protein belongs to the ABC transporter superfamily.

This is an uncharacterized protein from Haemophilus influenzae (strain ATCC 51907 / DSM 11121 / KW20 / Rd).